A 221-amino-acid chain; its full sequence is Phosphoribosylformylglycinamidine synthase subunit PurQ (221 aa).

The Glutamine amidotransferase type-1 domain maps to 6–221 (VGVVVFPGSN…LFTLKSLILK (216 aa)). The active-site Nucleophile is the cysteine 89. Active-site residues include histidine 197 and glutamate 199.

In terms of assembly, part of the FGAM synthase complex composed of 1 PurL, 1 PurQ and 2 PurS subunits.

The protein localises to the cytoplasm. It catalyses the reaction N(2)-formyl-N(1)-(5-phospho-beta-D-ribosyl)glycinamide + L-glutamine + ATP + H2O = 2-formamido-N(1)-(5-O-phospho-beta-D-ribosyl)acetamidine + L-glutamate + ADP + phosphate + H(+). The enzyme catalyses L-glutamine + H2O = L-glutamate + NH4(+). Its pathway is purine metabolism; IMP biosynthesis via de novo pathway; 5-amino-1-(5-phospho-D-ribosyl)imidazole from N(2)-formyl-N(1)-(5-phospho-D-ribosyl)glycinamide: step 1/2. Part of the phosphoribosylformylglycinamidine synthase complex involved in the purines biosynthetic pathway. Catalyzes the ATP-dependent conversion of formylglycinamide ribonucleotide (FGAR) and glutamine to yield formylglycinamidine ribonucleotide (FGAM) and glutamate. The FGAM synthase complex is composed of three subunits. PurQ produces an ammonia molecule by converting glutamine to glutamate. PurL transfers the ammonia molecule to FGAR to form FGAM in an ATP-dependent manner. PurS interacts with PurQ and PurL and is thought to assist in the transfer of the ammonia molecule from PurQ to PurL. In Prochlorococcus marinus (strain MIT 9312), this protein is Phosphoribosylformylglycinamidine synthase subunit PurQ.